An 874-amino-acid chain; its full sequence is Isopimaradiene synthase, chloroplastic (874 aa).

Over residues 1-12 the composition is skewed to polar residues; that stretch reads MALPSSSLSSRI. Residues 1 to 20 form a disordered region; it reads MALPSSSLSSRIPTGPHPLT. A chloroplast-targeting transit peptide spans 1 to 37; sequence MALPSSSLSSRIPTGPHPLTHTQCIPHFSTTINAGIS. The Mg(2+) site is built by aspartate 407, aspartate 409, aspartate 626, aspartate 630, asparagine 770, and glutamate 778. A DXDD motif motif is present at residues 407–410; sequence DIDD. Positions 626–630 match the DDXXD motif motif; the sequence is DDLYD.

The protein belongs to the terpene synthase family. Tpsd subfamily. Requires Mg(2+) as cofactor. Mn(2+) is required as a cofactor.

The protein resides in the plastid. Its subcellular location is the chloroplast. It catalyses the reaction (+)-copalyl diphosphate = isopimara-8(14),15-diene + diphosphate. It functions in the pathway terpene metabolism; oleoresin biosynthesis. Its function is as follows. Terpene synthase (TPS) involved in the biosynthesis of diterpene natural products included in conifer oleoresin secretions and volatile emissions; these compounds contribute to biotic and abiotic stress defense against herbivores and pathogens. Catalyzes the conversion of (+)-copalyl diphosphate ((+)-CPP) to isopimaradiene. In Picea sitchensis (Sitka spruce), this protein is Isopimaradiene synthase, chloroplastic.